We begin with the raw amino-acid sequence, 275 residues long: Nitrogenase iron protein 1 (275 aa).

G9–S16 serves as a coordination point for ATP. C97 provides a ligand contact to [4Fe-4S] cluster. Residue R100 is modified to ADP-ribosylarginine; by dinitrogenase reductase ADP-ribosyltransferase. C132 provides a ligand contact to [4Fe-4S] cluster.

It belongs to the NifH/BchL/ChlL family. In terms of assembly, homodimer. The cofactor is [4Fe-4S] cluster. In terms of processing, the reversible ADP-ribosylation of Arg-100 inactivates the nitrogenase reductase and regulates nitrogenase activity.

It catalyses the reaction N2 + 8 reduced [2Fe-2S]-[ferredoxin] + 16 ATP + 16 H2O = H2 + 8 oxidized [2Fe-2S]-[ferredoxin] + 2 NH4(+) + 16 ADP + 16 phosphate + 6 H(+). Its function is as follows. The key enzymatic reactions in nitrogen fixation are catalyzed by the nitrogenase complex, which has 2 components: the iron protein and the molybdenum-iron protein. This Methanosarcina barkeri protein is Nitrogenase iron protein 1 (nifH1).